Reading from the N-terminus, the 188-residue chain is 3-deoxy-D-manno-octulosonate 8-phosphate phosphatase KdsC (188 aa).

The Mg(2+) site is built by Asp32 and Asp34. Residues Asp34, 55–59 (NVRDG), Arg63, Arg78, Arg86, and Lys102 each bind substrate. Mg(2+) is bound at residue Asp125.

In terms of assembly, homotetramer. Mg(2+) is required as a cofactor. Requires Co(2+) as cofactor.

The enzyme catalyses 3-deoxy-alpha-D-manno-2-octulosonate-8-phosphate + H2O = 3-deoxy-alpha-D-manno-oct-2-ulosonate + phosphate. The protein operates within carbohydrate biosynthesis; 3-deoxy-D-manno-octulosonate biosynthesis; 3-deoxy-D-manno-octulosonate from D-ribulose 5-phosphate: step 3/3. Its pathway is bacterial outer membrane biogenesis; lipopolysaccharide biosynthesis. Inhibited by calcium, cadmium, mercury, and copper ions. Its function is as follows. Catalyzes the hydrolysis of 3-deoxy-D-manno-octulosonate 8-phosphate (KDO 8-P) to 3-deoxy-D-manno-octulosonate (KDO) and inorganic phosphate. The protein is 3-deoxy-D-manno-octulosonate 8-phosphate phosphatase KdsC of Escherichia coli (strain B / BL21-DE3).